A 445-amino-acid polypeptide reads, in one-letter code: tRNA modification GTPase MnmE (445 aa).

Residues Arg20, Glu79, and Lys119 each coordinate (6S)-5-formyl-5,6,7,8-tetrahydrofolate. Positions 215–371 constitute a TrmE-type G domain; sequence GLKLAIIGPP…ILKNIEEIAE (157 aa). Asn225 contributes to the K(+) binding site. GTP contacts are provided by residues 225–230, 244–250, and 269–272; these read NAGKSS, SNIAGTT, and DTAG. Ser229 lines the Mg(2+) pocket. Positions 244, 246, and 249 each coordinate K(+). Thr250 is a binding site for Mg(2+). Lys445 serves as a coordination point for (6S)-5-formyl-5,6,7,8-tetrahydrofolate.

This sequence belongs to the TRAFAC class TrmE-Era-EngA-EngB-Septin-like GTPase superfamily. TrmE GTPase family. As to quaternary structure, homodimer. Heterotetramer of two MnmE and two MnmG subunits. K(+) is required as a cofactor.

Its subcellular location is the cytoplasm. Exhibits a very high intrinsic GTPase hydrolysis rate. Involved in the addition of a carboxymethylaminomethyl (cmnm) group at the wobble position (U34) of certain tRNAs, forming tRNA-cmnm(5)s(2)U34. This is tRNA modification GTPase MnmE from Rickettsia bellii (strain RML369-C).